A 272-amino-acid polypeptide reads, in one-letter code: Serine/arginine-rich splicing factor 5 (272 aa).

The 71-residue stretch at 4 to 74 (CRVFIGRLNP…ERVTIEHARA (71 aa)) folds into the RRM 1 domain. Residues 73–105 (RARSRGGRGRGRYSDRFSSRRPRNDRRNAPPVR) form a disordered region. The segment covering 74-83 (ARSRGGRGRG) has biased composition (basic residues). Ser86 bears the Phosphoserine mark. One can recognise an RRM 2 domain in the interval 108-181 (NRLIVENLSS…RKIKLIEGSK (74 aa)). N6-acetyllysine is present on Lys167. A disordered region spans residues 174–272 (IKLIEGSKRH…SRSRSVDSGN (99 aa)). Basic residues predominate over residues 182 to 229 (RHSRSRSRSRSRTRSSSRSRSRSRSRSRKSYSRSRSRSRSRSRSKSRS). 5 positions are modified to phosphoserine: Ser227, Ser229, Ser233, Ser250, and Ser253. Residues 242 to 254 (RGSSSRSKSPASV) are compositionally biased toward low complexity.

This sequence belongs to the splicing factor SR family. As to quaternary structure, interacts (via RS domain) with PHF5A (via N-terminus). Found in a pre-mRNA splicing complex with SRSF4/SFRS4, SRSF5/SFRS5, SNRNP70, SNRPA1, SRRM1 and SRRM2. Post-translationally, extensively phosphorylated on serine residues in the RS domain.

The protein resides in the nucleus. In terms of biological role, plays a role in constitutive splicing and can modulate the selection of alternative splice sites. The polypeptide is Serine/arginine-rich splicing factor 5 (SRSF5) (Homo sapiens (Human)).